We begin with the raw amino-acid sequence, 228 residues long: Large ribosomal subunit protein bL25 (228 aa).

The interval 196–228 (EEAAVAEAQSAESAEGKAEAEAEATNEKNKSEA) is disordered. The span at 209-228 (AEGKAEAEAEATNEKNKSEA) shows a compositional bias: basic and acidic residues.

The protein belongs to the bacterial ribosomal protein bL25 family. CTC subfamily. As to quaternary structure, part of the 50S ribosomal subunit; part of the 5S rRNA/L5/L18/L25 subcomplex. Contacts the 5S rRNA. Binds to the 5S rRNA independently of L5 and L18.

This is one of the proteins that binds to the 5S RNA in the ribosome where it forms part of the central protuberance. The protein is Large ribosomal subunit protein bL25 of Methylorubrum extorquens (strain PA1) (Methylobacterium extorquens).